Reading from the N-terminus, the 299-residue chain is NmrA-like family domain-containing protein 1 (299 aa).

Residues 11 to 16 (GGTGAQ), 37 to 41 (RNPRK), 58 to 59 (DQ), Gln62, 79 to 81 (TNY), Lys92, Lys133, and 155 to 158 (YFEN) contribute to the NADP(+) site. An interaction with ASS1 region spans residues 153-189 (PCYFENLLSHFLPQKAPDGKSYLLSLPTGDVPMDGMS).

Belongs to the NmrA-type oxidoreductase family. As to quaternary structure, homodimer. Interacts with ASS1. Interaction is enhanced by low NADPH/NADP(+) ratios, which results in inhibition of ASS1 activity.

The protein resides in the cytoplasm. It is found in the perinuclear region. It localises to the nucleus. Redox sensor protein. Undergoes restructuring and subcellular redistribution in response to changes in intracellular NADPH/NADP(+) levels. At low NADPH concentrations the protein is found mainly as a monomer, and binds argininosuccinate synthase (ASS1), the enzyme involved in nitric oxide synthesis. Association with ASS1 impairs its activity and reduces the production of nitric oxide, which subsecuently prevents apoptosis. Under normal NADPH concentrations, the protein is found as a dimer and hides the binding site for ASS1. The homodimer binds one molecule of NADPH. Has higher affinity for NADPH than for NADP(+). Binding to NADPH is necessary to form a stable dimer. This Homo sapiens (Human) protein is NmrA-like family domain-containing protein 1 (NMRAL1).